Consider the following 207-residue polypeptide: Outer-membrane lipoprotein carrier protein (207 aa).

A signal peptide spans 1 to 23 (MMKPHNLFQFLAVCSLTVAVASA).

It belongs to the LolA family. As to quaternary structure, monomer.

Its subcellular location is the periplasm. Its function is as follows. Participates in the translocation of lipoproteins from the inner membrane to the outer membrane. Only forms a complex with a lipoprotein if the residue after the N-terminal Cys is not an aspartate (The Asp acts as a targeting signal to indicate that the lipoprotein should stay in the inner membrane). This chain is Outer-membrane lipoprotein carrier protein, found in Neisseria gonorrhoeae (strain ATCC 700825 / FA 1090).